The primary structure comprises 1078 residues: Lon protease homolog, mitochondrial (1078 aa).

The N-terminal 27 residues, 1–27, are a transit peptide targeting the mitochondrion; that stretch reads MIKASKCNKPRALFLVRVSIPRTFIRN. The span at 71–123 shows a compositional bias: basic and acidic residues; that stretch reads SEKEKQPSTDKSNDKDKPSRKEKGKDKEKENEEKKDINMDEKYEINEETDTKP. The segment at 71-179 is disordered; the sequence is SEKEKQPSTD…KEFLSPSDSG (109 aa). Over residues 127–157 the composition is skewed to low complexity; it reads PNNPVSSKSNISSSSGGDNNNNNNNNNNNND. A compositionally biased stretch (basic and acidic residues) spans 158 to 172; it reads SDGKNDDGSPKDKEF. The 219-residue stretch at 182-400 folds into the Lon N-terminal domain; that stretch reads PPFLAIAMKD…LSLQLLQVEA (219 aa). 548 to 555 contributes to the ATP binding site; that stretch reads GPPGTGKT. A disordered region spans residues 792-825; sequence NSPIEYIQSNTEVKAETTTESQQEQEKEKEKDEE. Residues 815–825 are compositionally biased toward basic and acidic residues; that stretch reads EQEKEKEKDEE. Residues 861-1049 enclose the Lon proteolytic domain; sequence TLNPGVATGL…SEVFEHLFQG (189 aa). Active-site residues include serine 955 and lysine 998.

The protein belongs to the peptidase S16 family. As to quaternary structure, homohexamer or homoheptamer. Organized in a ring with a central cavity.

It localises to the mitochondrion matrix. The catalysed reaction is Hydrolysis of proteins in presence of ATP.. ATP-dependent serine protease that mediates the selective degradation of misfolded, unassembled or oxidatively damaged polypeptides as well as certain short-lived regulatory proteins in the mitochondrial matrix. May also have a chaperone function in the assembly of inner membrane protein complexes. Participates in the regulation of mitochondrial gene expression and in the maintenance of the integrity of the mitochondrial genome. Binds to mitochondrial DNA in a site-specific manner. This is Lon protease homolog, mitochondrial from Candida albicans (strain SC5314 / ATCC MYA-2876) (Yeast).